A 311-amino-acid chain; its full sequence is tRNA-cytidine(32) 2-sulfurtransferase (311 aa).

Residues 45 to 50 (SGGKDS) carry the PP-loop motif motif. Residues C120, C123, and C211 each coordinate [4Fe-4S] cluster.

It belongs to the TtcA family. In terms of assembly, homodimer. Requires Mg(2+) as cofactor. The cofactor is [4Fe-4S] cluster.

It localises to the cytoplasm. The catalysed reaction is cytidine(32) in tRNA + S-sulfanyl-L-cysteinyl-[cysteine desulfurase] + AH2 + ATP = 2-thiocytidine(32) in tRNA + L-cysteinyl-[cysteine desulfurase] + A + AMP + diphosphate + H(+). Its pathway is tRNA modification. Its function is as follows. Catalyzes the ATP-dependent 2-thiolation of cytidine in position 32 of tRNA, to form 2-thiocytidine (s(2)C32). The sulfur atoms are provided by the cysteine/cysteine desulfurase (IscS) system. The sequence is that of tRNA-cytidine(32) 2-sulfurtransferase from Shewanella pealeana (strain ATCC 700345 / ANG-SQ1).